Here is a 210-residue protein sequence, read N- to C-terminus: Oxygen-insensitive NADPH nitroreductase (210 aa).

150–155 (GVSLMG) is an NADP(+) binding site.

This sequence belongs to the nitroreductase family.

In terms of biological role, reduction of a variety of nitroaromatic compounds using NADPH as source of reducing equivalents; two electrons are transferred. Capable of reducing metronidazole; inactive RdxA renders the bacterium resistant to this compound. The reduction of metronidazole generates hydroxylamine, a potent mutagen and bactericide. The sequence is that of Oxygen-insensitive NADPH nitroreductase (rdxA) from Helicobacter pylori (strain ATCC 700392 / 26695) (Campylobacter pylori).